The following is an 874-amino-acid chain: DNA mismatch repair protein MutS (874 aa).

613 to 620 contacts ATP; the sequence is GPNMGGKS. Positions 799–820 are disordered; that stretch reads EAGSTPSPAPVSVNEPKPAAPT.

The protein belongs to the DNA mismatch repair MutS family.

Functionally, this protein is involved in the repair of mismatches in DNA. It is possible that it carries out the mismatch recognition step. This protein has a weak ATPase activity. The chain is DNA mismatch repair protein MutS from Marinobacter nauticus (strain ATCC 700491 / DSM 11845 / VT8) (Marinobacter aquaeolei).